A 60-amino-acid polypeptide reads, in one-letter code: UPF0434 protein Spro_1718 (60 aa).

The protein belongs to the UPF0434 family.

This is UPF0434 protein Spro_1718 from Serratia proteamaculans (strain 568).